The following is a 218-amino-acid chain: Large ribosomal subunit protein uL3 (218 aa).

Residues 134-154 (GRASHGNSRSHNVPGSIGMAQ) form a disordered region. Gln-154 bears the N5-methylglutamine mark.

Belongs to the universal ribosomal protein uL3 family. Part of the 50S ribosomal subunit. Forms a cluster with proteins L14 and L19. Methylated by PrmB.

Functionally, one of the primary rRNA binding proteins, it binds directly near the 3'-end of the 23S rRNA, where it nucleates assembly of the 50S subunit. This chain is Large ribosomal subunit protein uL3, found in Polynucleobacter necessarius subsp. necessarius (strain STIR1).